The primary structure comprises 176 residues: 3-hydroxyanthranilate 3,4-dioxygenase (176 aa).

An O2-binding site is contributed by arginine 44. Fe cation is bound by residues histidine 48, glutamate 54, and histidine 92. Glutamate 54 contributes to the substrate binding site. 2 residues coordinate substrate: arginine 96 and glutamate 106. Fe cation is bound by residues cysteine 121, cysteine 124, cysteine 158, and cysteine 161.

The protein belongs to the 3-HAO family. Homodimer. Fe(2+) serves as cofactor.

It carries out the reaction 3-hydroxyanthranilate + O2 = (2Z,4Z)-2-amino-3-carboxymuconate 6-semialdehyde. The protein operates within cofactor biosynthesis; NAD(+) biosynthesis; quinolinate from L-kynurenine: step 3/3. Its function is as follows. Catalyzes the oxidative ring opening of 3-hydroxyanthranilate to 2-amino-3-carboxymuconate semialdehyde, which spontaneously cyclizes to quinolinate. The chain is 3-hydroxyanthranilate 3,4-dioxygenase from Xanthomonas campestris pv. campestris (strain B100).